A 382-amino-acid chain; its full sequence is Chaperone protein DnaJ (382 aa).

The J domain occupies 5–70 (DYYEVLGLKK…QKRAAYDQYG (66 aa)). A CR-type zinc finger spans residues 134–212 (GTTKDIQINT…CHGEGRVHKK (79 aa)). Positions 147, 150, 164, 167, 186, 189, 200, and 203 each coordinate Zn(2+). 4 CXXCXGXG motif repeats span residues 147-154 (CDSCGGSG), 164-171 (CPHCHGSG), 186-193 (CPSCHGSG), and 200-207 (CRSCHGEG).

It belongs to the DnaJ family. In terms of assembly, homodimer. Zn(2+) serves as cofactor.

The protein localises to the cytoplasm. Functionally, participates actively in the response to hyperosmotic and heat shock by preventing the aggregation of stress-denatured proteins and by disaggregating proteins, also in an autonomous, DnaK-independent fashion. Unfolded proteins bind initially to DnaJ; upon interaction with the DnaJ-bound protein, DnaK hydrolyzes its bound ATP, resulting in the formation of a stable complex. GrpE releases ADP from DnaK; ATP binding to DnaK triggers the release of the substrate protein, thus completing the reaction cycle. Several rounds of ATP-dependent interactions between DnaJ, DnaK and GrpE are required for fully efficient folding. Also involved, together with DnaK and GrpE, in the DNA replication of plasmids through activation of initiation proteins. This Haemophilus influenzae (strain PittGG) protein is Chaperone protein DnaJ.